The following is a 63-amino-acid chain: Small ribosomal subunit protein uS14 (63 aa).

Positions 26, 29, 42, and 45 each coordinate Zn(2+).

It belongs to the universal ribosomal protein uS14 family. Zinc-binding uS14 subfamily. In terms of assembly, part of the 30S ribosomal subunit. Contacts proteins S3 and S10. Zn(2+) is required as a cofactor.

Binds 16S rRNA, required for the assembly of 30S particles and may also be responsible for determining the conformation of the 16S rRNA at the A site. In Gloeobacter violaceus (strain ATCC 29082 / PCC 7421), this protein is Small ribosomal subunit protein uS14.